The chain runs to 457 residues: D-xylose transporter (457 aa).

The next 10 membrane-spanning stretches (helical) occupy residues 14–34, 46–66, 81–101, 104–124, 131–151, 164–184, 244–264, 281–301, 309–329, and 338–358; these read ALGGLLFGYDTGVISGAILFI, GWVVSAVLLGAILGAAIIGPS, IIFFVGALGSAFSPEFWTLII, IILGMAVGAASALIPTYLAEL, GTVSSLFQLMVMTGILLAYIT, WMLGFAAIPAALLFLGGLILP, LIIGIGLAIFQQVMGCNTVLY, LLAHIGIGIFNVIVTAIAVAI, KIVNIGAVGMGISLFVMSIGM, and AAIISVIALTVYIAFFSATWG. A beta-D-xylose-binding site is contributed by glutamine 138. Beta-D-xylose contacts are provided by residues 254–255 and asparagine 260; that span reads QQ. Residues tryptophan 362 and asparagine 385 each coordinate beta-D-xylose. The next 2 membrane-spanning stretches (helical) occupy residues 380-400 and 402-422; these read FASVINWTANMIVSLTFPSLL and FFGTGSLFIGYGILCFASIWF.

Belongs to the major facilitator superfamily. Sugar transporter (TC 2.A.1.1) family.

The protein resides in the cell membrane. With respect to regulation, transport is inhibited by 6-deoxy-D-glucose. Its function is as follows. Uptake of D-xylose across the boundary membrane with the concomitant transport of protons into the cell (symport system). Transport is driven by the proton motive force generated by either malolactic fermentation or by the metabolism of D-glucose. The polypeptide is D-xylose transporter (Levilactobacillus brevis (Lactobacillus brevis)).